A 158-amino-acid chain; its full sequence is Succinate dehydrogenase assembly factor 2, mitochondrial (158 aa).

Residues 1–23 constitute a mitochondrion transit peptide; the sequence is MLRQLLATARRLLLPLATPKRCL.

It belongs to the SDHAF2 family. In terms of assembly, interacts with the flavoprotein subunit within the SDH catalytic dimer.

Its subcellular location is the mitochondrion matrix. In terms of biological role, plays an essential role in the assembly of succinate dehydrogenase (SDH), an enzyme complex (also referred to as respiratory complex II) that is a component of both the tricarboxylic acid (TCA) cycle and the mitochondrial electron transport chain, and which couples the oxidation of succinate to fumarate with the reduction of ubiquinone (coenzyme Q) to ubiquinol. Required for flavinylation (covalent attachment of FAD) of the flavoprotein subunit of the SDH catalytic dimer. This Drosophila virilis (Fruit fly) protein is Succinate dehydrogenase assembly factor 2, mitochondrial.